Reading from the N-terminus, the 509-residue chain is CDK5RAP3 protein homolog (509 aa).

This sequence belongs to the CDK5RAP3 family.

It localises to the nucleus. The protein localises to the cytoplasm. In terms of biological role, substrate adapter of E3 ligase complexes mediating ufmylation, the covalent attachment of the ubiquitin-like modifier UFM1 to substrate proteins, and which is involved in various processes, such as ribosome recycling and reticulophagy (also called ER-phagy). The polypeptide is CDK5RAP3 protein homolog (Drosophila melanogaster (Fruit fly)).